Consider the following 216-residue polypeptide: Probable nicotinate-nucleotide adenylyltransferase (216 aa).

Belongs to the NadD family.

It catalyses the reaction nicotinate beta-D-ribonucleotide + ATP + H(+) = deamido-NAD(+) + diphosphate. Its pathway is cofactor biosynthesis; NAD(+) biosynthesis; deamido-NAD(+) from nicotinate D-ribonucleotide: step 1/1. In terms of biological role, catalyzes the reversible adenylation of nicotinate mononucleotide (NaMN) to nicotinic acid adenine dinucleotide (NaAD). This Maridesulfovibrio salexigens (strain ATCC 14822 / DSM 2638 / NCIMB 8403 / VKM B-1763) (Desulfovibrio salexigens) protein is Probable nicotinate-nucleotide adenylyltransferase.